We begin with the raw amino-acid sequence, 147 residues long: MAGSSHTIEPEIYRGVSTLDEPSAAWGWHGLKRNTIQLAGWISVLFMLGYNFGNHKGHVETIWLLVITALLVIGLLIHLFEPKLSQVRTITSRNKPVGHVEPDWTYDQATLTGTWGNLTDSQLRSVNIEPSRVAHLRAADSAKELDN.

Helical transmembrane passes span 35 to 55 (TIQL…FGNH) and 62 to 82 (IWLL…LFEP).

In terms of assembly, has been detected in a cytochrome bc1-aa3 supercomplex; its deletion however leaves complex activity unaffected.

The protein resides in the cell membrane. This is an uncharacterized protein from Corynebacterium glutamicum (strain ATCC 13032 / DSM 20300 / JCM 1318 / BCRC 11384 / CCUG 27702 / LMG 3730 / NBRC 12168 / NCIMB 10025 / NRRL B-2784 / 534).